The sequence spans 170 residues: Head completion protein (170 aa).

It is found in the virion. In terms of biological role, head completion protein that closes the capsid once the viral DNA has been packaged. Probably part of the head-tail connector by binding to the portal protein and to the tail completion protein. The sequence is that of Head completion protein from Escherichia coli (Enterobacteria phage T5).